Consider the following 458-residue polypeptide: UDP-N-acetylmuramate--L-alanine ligase (458 aa).

118-124 (GTHGKTT) contributes to the ATP binding site.

This sequence belongs to the MurCDEF family.

The protein resides in the cytoplasm. It carries out the reaction UDP-N-acetyl-alpha-D-muramate + L-alanine + ATP = UDP-N-acetyl-alpha-D-muramoyl-L-alanine + ADP + phosphate + H(+). Its pathway is cell wall biogenesis; peptidoglycan biosynthesis. Cell wall formation. The sequence is that of UDP-N-acetylmuramate--L-alanine ligase from Clostridium acetobutylicum (strain ATCC 824 / DSM 792 / JCM 1419 / IAM 19013 / LMG 5710 / NBRC 13948 / NRRL B-527 / VKM B-1787 / 2291 / W).